A 222-amino-acid polypeptide reads, in one-letter code: Protein Thf1 (222 aa).

Positions 169-208 form a coiled coil; the sequence is IEKVKRDLELYRSNLDKINQARSLMKELVEQERKRRAQQT. Residues 197-222 are disordered; that stretch reads VEQERKRRAQQTSAPPAVDASSDAPA. The segment covering 209-222 has biased composition (low complexity); that stretch reads SAPPAVDASSDAPA.

It belongs to the THF1 family.

Its function is as follows. May be involved in photosynthetic membrane biogenesis. The sequence is that of Protein Thf1 from Thermosynechococcus vestitus (strain NIES-2133 / IAM M-273 / BP-1).